We begin with the raw amino-acid sequence, 539 residues long: Alpha-aminoadipic semialdehyde dehydrogenase (539 aa).

The transit peptide at 1–26 (MWRVPRRLCVQSVKTSKLSGPWSRPA) directs the protein to the mitochondrion. An N6-acetyllysine; alternate mark is found at Lys86, Lys94, and Lys97. N6-succinyllysine; alternate occurs at positions 86, 94, and 97. NAD(+)-binding positions include 192 to 194 (TAF), Lys218, 258 to 259 (GT), 274 to 275 (GS), 274 to 279 (GSTQVG), and 296 to 297 (EL). Glu296 acts as the Proton acceptor in catalysis. The active-site Nucleophile is Cys330. Position 331 (Thr331) interacts with (S)-2-amino-6-oxohexanoate. Glu427 contributes to the NAD(+) binding site. Lys462 is subject to N6-acetyllysine. Residues Gly489 and Ala490 each coordinate (S)-2-amino-6-oxohexanoate. Residue Lys500 is modified to N6-acetyllysine. An N6-succinyllysine modification is found at Lys537.

Belongs to the aldehyde dehydrogenase family. In terms of assembly, homotetramer. Present in liver, kidney, brain and pancreas, and at lower levels in jejunum, duodenum, stomach and testes (at protein level).

The protein localises to the cytoplasm. The protein resides in the cytosol. It localises to the nucleus. It is found in the mitochondrion. It catalyses the reaction nonanal + NAD(+) + H2O = nonanoate + NADH + 2 H(+). The enzyme catalyses (S)-2-amino-6-oxohexanoate + NAD(+) + H2O = L-2-aminoadipate + NADH + 2 H(+). The catalysed reaction is betaine aldehyde + NAD(+) + H2O = glycine betaine + NADH + 2 H(+). It carries out the reaction an aldehyde + NAD(+) + H2O = a carboxylate + NADH + 2 H(+). It catalyses the reaction hexanal + NAD(+) + H2O = hexanoate + NADH + 2 H(+). The enzyme catalyses octanal + NAD(+) + H2O = octanoate + NADH + 2 H(+). The catalysed reaction is (E)-non-2-enal + NAD(+) + H2O = (E)-non-2-enoate + NADH + 2 H(+). It carries out the reaction (E)-4-hydroxynon-2-enal + NAD(+) + H2O = (E)-4-hydroxynon-2-enoate + NADH + 2 H(+). It participates in amine and polyamine biosynthesis; betaine biosynthesis via choline pathway; betaine from betaine aldehyde: step 1/1. In terms of biological role, multifunctional enzyme mediating important protective effects. Metabolizes betaine aldehyde to betaine, an important cellular osmolyte and methyl donor. Protects cells from oxidative stress by metabolizing a number of lipid peroxidation-derived aldehydes. Involved in lysine catabolism. The sequence is that of Alpha-aminoadipic semialdehyde dehydrogenase from Mus musculus (Mouse).